The primary structure comprises 327 residues: uncharacterized protein (327 aa).

Residues 12-79 enclose the S4 RNA-binding domain; the sequence is KRIDEFLAKE…LKKELDLEIE (68 aa). Asp136 is an active-site residue.

Belongs to the pseudouridine synthase RluA family.

It carries out the reaction a uridine in RNA = a pseudouridine in RNA. This is an uncharacterized protein from Helicobacter pylori (strain J99 / ATCC 700824) (Campylobacter pylori J99).